Consider the following 297-residue polypeptide: Ribonuclease HIII (297 aa).

Positions 81–297 constitute an RNase H type-2 domain; it reads IPIIGTDEVG…NTKKAQALLK (217 aa). Residues Asp-87, Glu-88, and Asp-192 each contribute to the a divalent metal cation site.

It belongs to the RNase HII family. RnhC subfamily. Mn(2+) serves as cofactor. The cofactor is Mg(2+).

Its subcellular location is the cytoplasm. The catalysed reaction is Endonucleolytic cleavage to 5'-phosphomonoester.. In terms of biological role, endonuclease that specifically degrades the RNA of RNA-DNA hybrids. The protein is Ribonuclease HIII of Streptococcus agalactiae serotype III (strain NEM316).